Reading from the N-terminus, the 623-residue chain is Chaperone protein DnaK (623 aa).

Threonine 175 is modified (phosphothreonine; by autocatalysis). Residues 580–623 (PEGAQGAGFDPNNMGGANAGNASAGNDKKDDNVVDADFKVEDDK) are disordered. The segment covering 591–604 (NNMGGANAGNASAG) has biased composition (low complexity). Positions 605–623 (NDKKDDNVVDADFKVEDDK) are enriched in basic and acidic residues.

Belongs to the heat shock protein 70 family.

Its function is as follows. Acts as a chaperone. In Clostridium botulinum (strain Hall / ATCC 3502 / NCTC 13319 / Type A), this protein is Chaperone protein DnaK.